An 88-amino-acid chain; its full sequence is Acyl carrier protein (88 aa).

Residues 4–79 enclose the Carrier domain; it reads DSVPAKVMEI…AAVDYIQNKM (76 aa). Position 39 is an O-(pantetheine 4'-phosphoryl)serine (serine 39).

This sequence belongs to the acyl carrier protein (ACP) family. In terms of processing, 4'-phosphopantetheine is transferred from CoA to a specific serine of apo-ACP by AcpS. This modification is essential for activity because fatty acids are bound in thioester linkage to the sulfhydryl of the prosthetic group.

The protein localises to the cytoplasm. The protein operates within lipid metabolism; fatty acid biosynthesis. Functionally, carrier of the growing fatty acid chain in fatty acid biosynthesis. The protein is Acyl carrier protein of Trichodesmium erythraeum (strain IMS101).